Here is a 198-residue protein sequence, read N- to C-terminus: Putative manganese efflux pump MntP (198 aa).

6 consecutive transmembrane segments (helical) span residues 3–23 (SIEL…VAIC), 37–57 (VLTG…GYLL), 65–85 (ITSI…INMI), 105–127 (SLTV…FAFL), 131–153 (IIPA…VKIG), and 171–191 (ILIG…SFVF).

Belongs to the MntP (TC 9.B.29) family.

It localises to the cell membrane. Functionally, probably functions as a manganese efflux pump. The chain is Putative manganese efflux pump MntP from Acetivibrio thermocellus (strain ATCC 27405 / DSM 1237 / JCM 9322 / NBRC 103400 / NCIMB 10682 / NRRL B-4536 / VPI 7372) (Clostridium thermocellum).